Here is a 228-residue protein sequence, read N- to C-terminus: 7-cyano-7-deazaguanine synthase (228 aa).

11 to 21 (LSGGLDSATCL) is an ATP binding site. The Zn(2+) site is built by C191, C201, C204, and C207.

The protein belongs to the QueC family. Zn(2+) serves as cofactor.

The catalysed reaction is 7-carboxy-7-deazaguanine + NH4(+) + ATP = 7-cyano-7-deazaguanine + ADP + phosphate + H2O + H(+). The protein operates within purine metabolism; 7-cyano-7-deazaguanine biosynthesis. Its function is as follows. Catalyzes the ATP-dependent conversion of 7-carboxy-7-deazaguanine (CDG) to 7-cyano-7-deazaguanine (preQ(0)). The polypeptide is 7-cyano-7-deazaguanine synthase (Azoarcus sp. (strain BH72)).